We begin with the raw amino-acid sequence, 887 residues long: Putative RNA-binding protein 15B (887 aa).

The tract at residues 1-132 (MKRQSERDSS…EPAGPGSTAA (132 aa)) is disordered. A compositionally biased stretch (low complexity) spans 10 to 20 (SPSGRGSSSSA). Basic and acidic residues-rich tracts occupy residues 22–34 (RPRE…EAGG) and 65–77 (GHRD…DANH). Over residues 83–94 (RSSGAPGGGGRT) the composition is skewed to gly residues. The span at 95–110 (GKASGDPGAGGASPRA) shows a compositional bias: low complexity. Phosphoserine occurs at positions 107 and 111. The span at 111-122 (SPLPPPPPPPGA) shows a compositional bias: pro residues. Low complexity predominate over residues 123-132 (EPAGPGSTAA). An RRM 1 domain is found at 136 to 216 (KTLLISSLSP…RPLKVEPVYL (81 aa)). A Glycyl lysine isopeptide (Lys-Gly) (interchain with G-Cter in SUMO2) cross-link involves residue Lys210. The segment at 215-249 (YLRGGGSSRRSSSSSAAASTPPPGPPAPADPLGYL) is disordered. Residues 222 to 233 (SRRSSSSSAAAS) show a composition bias toward low complexity. Residues 234–243 (TPPPGPPAPA) are compositionally biased toward pro residues. Phosphoserine occurs at positions 261 and 263. RRM domains are found at residues 333-410 (RNLF…YGKA) and 414-488 (TRLW…FAKA). A Phosphothreonine modification is found at Thr529. Phosphoserine occurs at positions 549, 553, and 559. Residues 549 to 703 (SLSKSSDRRN…TLEEPKHETK (155 aa)) are disordered. Basic and acidic residues-rich tracts occupy residues 570 to 613 (RSGE…ERSR), 623 to 643 (RGSD…EGTK), and 668 to 700 (EAPD…EPKH). The Nuclear localization signal signature appears at 590–594 (RRKRR). Lys699 is covalently cross-linked (Glycyl lysine isopeptide (Lys-Gly) (interchain with G-Cter in SUMO2)). In terms of domain architecture, SPOC spans 708-886 (LSEYAQTLQL…HMVIVIVRDT (179 aa)). Positions 719–887 (WNGLLVLKNS…MVIVIVRDTA (169 aa)) are interaction with Epstein-Barr virus BMLF1.

It belongs to the RRM Spen family. As to quaternary structure, component of the WMM complex, a N6-methyltransferase complex composed of a catalytic subcomplex, named MAC, and of an associated subcomplex, named MACOM. The MAC subcomplex is composed of METTL3 and METTL14. The MACOM subcomplex is composed of WTAP, ZC3H13, CBLL1/HAKAI, VIRMA, and, in some cases of RBM15 (RBM15 or RBM15B). May interact with NCOR2. Interacts with NXF1, the interaction is required to promote mRNA export.

It is found in the nucleus. The protein localises to the nucleoplasm. Its subcellular location is the nucleus speckle. The protein resides in the nucleus envelope. Its function is as follows. RNA-binding protein that acts as a key regulator of N6-methyladenosine (m6A) methylation of RNAs, thereby regulating different processes, such as alternative splicing of mRNAs and X chromosome inactivation mediated by Xist RNA. Associated component of the WMM complex, a complex that mediates N6-methyladenosine (m6A) methylation of RNAs, a modification that plays a role in the efficiency of mRNA splicing and RNA processing. Plays a key role in m6A methylation, possibly by binding target RNAs and recruiting the WMM complex. Involved in random X inactivation mediated by Xist RNA: acts by binding Xist RNA and recruiting the WMM complex, which mediates m6A methylation, leading to target YTHDC1 reader on Xist RNA and promoting transcription repression activity of Xist. Functions in the regulation of alternative or illicit splicing, possibly by regulating m6A methylation. Inhibits pre-mRNA splicing. Also functions as a mRNA export factor by acting as a cofactor for the nuclear export receptor NXF1. The sequence is that of Putative RNA-binding protein 15B (Rbm15b) from Mus musculus (Mouse).